Here is an 841-residue protein sequence, read N- to C-terminus: Follistatin-related protein 4 (841 aa).

An N-terminal signal peptide occupies residues Met-1–Gly-22. Residues Ser-29 to Gly-54 form a disordered region. Over residues Glu-42 to Gly-54 the composition is skewed to basic and acidic residues. One can recognise a Kazal-like domain in the interval Thr-80–Leu-134. Intrachain disulfides connect Cys-86–Cys-118, Cys-92–Cys-111, and Cys-100–Cys-132. 2 EF-hand domains span residues Gln-173–Met-208 and Asp-225–Ser-247. The Ca(2+) site is built by Asp-186, Asp-188, Asn-190, His-192, Glu-197, Asp-225, Asn-227, Asp-229, Ser-231, and Glu-236. 2 consecutive Ig-like domains span residues Pro-250–Val-336 and Pro-340–Ser-425. 2 disulfide bridges follow: Cys-269/Cys-320 and Cys-361/Cys-412. The N-linked (GlcNAc...) asparagine glycan is linked to Asn-317.

It localises to the secreted. The polypeptide is Follistatin-related protein 4 (Fstl4) (Mus musculus (Mouse)).